The sequence spans 318 residues: Olfactory receptor 5M5 (318 aa).

The Extracellular portion of the chain corresponds to 1 to 31 (MLAPKKMVRGNYSMVTEFILLGLTDRPELQP). N-linked (GlcNAc...) asparagine glycosylation is present at Asn11. The helical transmembrane segment at 32–52 (LLFVLFLVIYLITVGGNLGMM) threads the bilayer. Residues 53 to 60 (VLIRIDSR) are Cytoplasmic-facing. A helical transmembrane segment spans residues 61-81 (LHTPMYYFLASLSCLDLCYST). Residues 82 to 105 (NVTPKMLVNFLSEKKTISYAACLV) are Extracellular-facing. Cys103 and Cys195 are joined by a disulfide. Residues 106-126 (QCYFFIAMVITEYYMLAVMAY) traverse the membrane as a helical segment. Over 127–139 (DRYMAICNPLLYS) the chain is Cytoplasmic. Residues 140 to 160 (SKMSKGVCVRLIAGPYIYGFL) traverse the membrane as a helical segment. Residues 161–202 (SGLMETMWTYRLTFCGSNIINHFYCADPPLIRLSCSDTFIKE) lie on the Extracellular side of the membrane. The helical transmembrane segment at 203–223 (TSMFVVAGFNLSNSLFIILIS) threads the bilayer. Topologically, residues 224–243 (YLFILIAILRMRSAEGRRKA) are cytoplasmic. Residues 244-264 (FSTCGSHLVAVTVFYGTLFCM) form a helical membrane-spanning segment. The Extracellular segment spans residues 265-277 (YVRPPTDKSVEQS). The chain crosses the membrane as a helical span at residues 278-298 (KIIAVFYTFVSPMLNPIIYSL). Residues 299–318 (RNKDVKHAFWKLVRRNVLSK) lie on the Cytoplasmic side of the membrane.

It belongs to the G-protein coupled receptor 1 family.

Its subcellular location is the cell membrane. Potential odorant receptor. The polypeptide is Olfactory receptor 5M5 (Mus musculus (Mouse)).